Reading from the N-terminus, the 202-residue chain is Imidazoleglycerol-phosphate dehydratase (202 aa).

It belongs to the imidazoleglycerol-phosphate dehydratase family.

It is found in the cytoplasm. It catalyses the reaction D-erythro-1-(imidazol-4-yl)glycerol 3-phosphate = 3-(imidazol-4-yl)-2-oxopropyl phosphate + H2O. It participates in amino-acid biosynthesis; L-histidine biosynthesis; L-histidine from 5-phospho-alpha-D-ribose 1-diphosphate: step 6/9. This Clavibacter michiganensis subsp. michiganensis (strain NCPPB 382) protein is Imidazoleglycerol-phosphate dehydratase.